The following is a 163-amino-acid chain: ATP synthase subunit b 1 (163 aa).

Residues 5–25 (LDATFFAFVGLVLFLALVVYL) form a helical membrane-spanning segment.

Belongs to the ATPase B chain family. F-type ATPases have 2 components, F(1) - the catalytic core - and F(0) - the membrane proton channel. F(1) has five subunits: alpha(3), beta(3), gamma(1), delta(1), epsilon(1). F(0) has three main subunits: a(1), b(2) and c(10-14). The alpha and beta chains form an alternating ring which encloses part of the gamma chain. F(1) is attached to F(0) by a central stalk formed by the gamma and epsilon chains, while a peripheral stalk is formed by the delta and b chains.

The protein resides in the cell inner membrane. Functionally, f(1)F(0) ATP synthase produces ATP from ADP in the presence of a proton or sodium gradient. F-type ATPases consist of two structural domains, F(1) containing the extramembraneous catalytic core and F(0) containing the membrane proton channel, linked together by a central stalk and a peripheral stalk. During catalysis, ATP synthesis in the catalytic domain of F(1) is coupled via a rotary mechanism of the central stalk subunits to proton translocation. Component of the F(0) channel, it forms part of the peripheral stalk, linking F(1) to F(0). This Rhizobium etli (strain CIAT 652) protein is ATP synthase subunit b 1.